The chain runs to 298 residues: Tyrosine recombinase XerC (298 aa).

Residues 2-88 (TDLHTDVERY…ALRSFFDWLV (87 aa)) enclose the Core-binding (CB) domain. The Tyr recombinase domain maps to 109–288 (HLPKNIDVDD…DFQHLASVYD (180 aa)). Residues Arg-148, Lys-172, His-240, Arg-243, and His-266 contribute to the active site. The O-(3'-phospho-DNA)-tyrosine intermediate role is filled by Tyr-275.

The protein belongs to the 'phage' integrase family. XerC subfamily. As to quaternary structure, forms a cyclic heterotetrameric complex composed of two molecules of XerC and two molecules of XerD, in which XerC interacts with XerD via its C-terminal region, XerD interacts with XerC via its C-terminal region and so on.

It localises to the cytoplasm. FtsK may regulate the catalytic switch between XerC and XerD in the heterotetrameric complex during the two steps of the recombination process. Site-specific tyrosine recombinase, which acts by catalyzing the cutting and rejoining of the recombining DNA molecules. Binds cooperatively to specific DNA consensus sequences that are separated from XerD binding sites by a short central region, forming the heterotetrameric XerC-XerD complex that recombines DNA substrates. The complex is essential to convert dimers of the bacterial chromosome into monomers to permit their segregation at cell division. It also contributes to the segregational stability of plasmids. In the complex XerC specifically exchanges the top DNA strands. The protein is Tyrosine recombinase XerC of Escherichia coli O139:H28 (strain E24377A / ETEC).